The following is a 156-amino-acid chain: Small ribosomal subunit protein uS7A/uS7B (156 aa).

The protein belongs to the universal ribosomal protein uS7 family. As to quaternary structure, part of the 30S ribosomal subunit. Contacts proteins S9 and S11.

In terms of biological role, one of the primary rRNA binding proteins, it binds directly to 16S rRNA where it nucleates assembly of the head domain of the 30S subunit. Is located at the subunit interface close to the decoding center, probably blocks exit of the E-site tRNA. The chain is Small ribosomal subunit protein uS7A/uS7B from Cereibacter sphaeroides (strain ATCC 17029 / ATH 2.4.9) (Rhodobacter sphaeroides).